Reading from the N-terminus, the 416-residue chain is Tyrosine--tRNA ligase (416 aa).

The 'HIGH' region signature appears at 55–64; it reads PTGSEIHLGH. A 'KMSKS' region motif is present at residues 249-253; that stretch reads KMSKS. Residue Lys252 participates in ATP binding. The region spanning 352–416 is the S4 RNA-binding domain; that stretch reads TKAFHLLSSI…GKKTFRRISN (65 aa).

It belongs to the class-I aminoacyl-tRNA synthetase family. TyrS type 2 subfamily. Homodimer.

It localises to the cytoplasm. The enzyme catalyses tRNA(Tyr) + L-tyrosine + ATP = L-tyrosyl-tRNA(Tyr) + AMP + diphosphate + H(+). Functionally, catalyzes the attachment of tyrosine to tRNA(Tyr) in a two-step reaction: tyrosine is first activated by ATP to form Tyr-AMP and then transferred to the acceptor end of tRNA(Tyr). The sequence is that of Tyrosine--tRNA ligase from Prochlorococcus marinus (strain SARG / CCMP1375 / SS120).